Reading from the N-terminus, the 347-residue chain is Pre-B-cell leukemia transcription factor 1 (347 aa).

Positions 1–37 (MDDQPRLMHSHPGVGMAGHPSLSQHMQDGTGANEGDV) are disordered. In terms of domain architecture, PBC spans 38–232 (GRKQDIGDIL…VMILRSRFLD (195 aa)). Residues 45–124 (DILQQIMTIT…EGVAGPEKGG (80 aa)) form a PBC-A region. The segment at 127–232 (AAAAAAAAAS…VMILRSRFLD (106 aa)) is PBC-B. Residues 233-295 (ARRKRRNFNK…NKRIRYKKNI (63 aa)) constitute a DNA-binding region (homeobox; TALE-type). Over residues 318-331 (VHGSQANSPSTPSS) the composition is skewed to polar residues. Positions 318–347 (VHGSQANSPSTPSSAGGYPSPCYQSDRRIQ) are disordered.

It belongs to the TALE/PBX homeobox family. As to quaternary structure, forms a heterodimer with isoform 2 of meis1; the interaction is necessary for neural fate induction. Shows broad, weak expression from blastula through gastrula stages. At stage 14/15, expressed in a broad arc that gives rise to the forebrain and eyes. More intensely expressed in the lateral neural folds (presumptive neural crest) and as horizontal stripes in the posterior neural plate that give rise to the hindbrain. As development proceeds, expression progresses posteriorly along the neural folds and at stage 21, expression is pronounced in the prospective hindbrain and in migratory neural crest cells. At later stages (stage 26), expression becomes intense within the dorsal portion of the forebrain, and in the optic cup, caudal branchial arch, peripheral to the pronephric anlage, and in the dorsal anterior half of the spinal cord. Expression remains robust in the hindbrain but gradually becomes more restricted. At stage 28, expressed in the dorsal lateral portion of the neural tube and in the somatic layer of the lateral plate mesoderm that surrounds the pronephric anlage.

It localises to the nucleus. In terms of biological role, acts as a transcriptional activator in complex with isoform 2 of meis1, to induce posterior neural and neural crest gene expression, and thereby specify hindbrain and neural crest cell fate. Binds to a highly conserved region in the promoter of the neural crest gene zic3. Required for the nuclear transport or retention of isoform 2 of meis1. The sequence is that of Pre-B-cell leukemia transcription factor 1 (pbx1) from Xenopus laevis (African clawed frog).